A 96-amino-acid polypeptide reads, in one-letter code: Uteroglobin (96 aa).

A signal peptide spans 1 to 21 (MKIAITITVVMLSICCSSASS).

The protein belongs to the secretoglobin family. Antiparallel homodimer; disulfide-linked. Interaction with LMBR1L is controversial. As to expression, club cells (nonciliated cells of the surface epithelium of the pulmonary airways).

Its subcellular location is the secreted. Binds phosphatidylcholine, phosphatidylinositol, polychlorinated biphenyls (PCB) and weakly progesterone, potent inhibitor of phospholipase A2. The chain is Uteroglobin (Scgb1a1) from Mus musculus (Mouse).